A 92-amino-acid polypeptide reads, in one-letter code: LYR motif-containing protein 4 homolog (92 aa).

A coiled-coil region spans residues A40–V68.

This sequence belongs to the complex I LYR family. Component of the mitochondrial core iron-sulfur cluster (ISC) assembly complex at least composed of the cysteine desulfurase Nfs1, the scaffold protein IscU, the accessory protein bcn92/Isd11/Lyrm4, and probably fh/frataxin. Interacts with Nfs1.

The protein resides in the mitochondrion. In terms of biological role, stabilizing factor of the core iron-sulfur cluster (ISC) assembly complex that regulates the stability and cysteine desulfurase activity of Nfs1 and participates in the [2Fe-2S] clusters assembly on the scaffolding protein IscU. The protein is LYR motif-containing protein 4 homolog of Drosophila subobscura (Fruit fly).